The following is a 551-amino-acid chain: MIIKVKGQTYFTSKYPNIIIPEKPVPQLILKHIRSKPDQVLLVDGLTFKEYSSHFVADTIEKVACGLNKLNIKKGDVLGVILPNLPEYVPIFHGTLLMGGITSLVNPDYTIEELSHTLATVSPRYLAVTLAVYEKIKNDLKRVFPSVEKVILVDIAGQTLKEIDQLTLSSDGIVMSFNQLINNNGKDYPIVRIDPKKDTAIIPFSSGTTGLFKGVCLSHHNIVSNTYQTQTIETSTYKKNDTVMGILPFFHIYGLMLFLMLMVKQGHRVVVLPKFEPVRFLELIQKYKVAISFIVPPVAIMFAKSPIVDKFDLSSLRTLFSGAAPLSSEVEDLIKERFKGRLVIKQGYGATELSPACFVIPSGLVKSGSAGILLPNQLAKIISPETGENLGMGEKGEICIKGPNVMLGYYNNEKATNEVIDKDGFLKTGDIGYVDEDGYYFIVDRSKELIKCKGFQVPPAELEALLLSHPKVADACVVGLSKGDMGEVPRGFVVIKQNESLTEKELLDWAHPKIANYKHFRGGIFFIPAIPKSATGKLLRKNLKDFNPPKL.

6 residues coordinate ATP: Ser205, Ser206, Gly207, Thr208, Thr209, and Lys213. Residue Tyr253 coordinates (E)-4-coumaroyl-AMP. Lys274 contributes to the CoA binding site. Residues 276-346 (EPVRFLELIQ…RFKGRLVIKQ (71 aa)) are SBD1. (E)-4-coumaroyl-AMP-binding residues include Ala323, Gln346, Gly347, and Thr351. 5 residues coordinate ATP: Gln346, Gly347, Thr351, Asp430, and Arg445. The segment at 347 to 409 (GYGATELSPA…IKGPNVMLGY (63 aa)) is SBD2. (E)-4-coumaroyl-AMP contacts are provided by Lys447 and Lys451. Residues Lys453 and Gly454 each contribute to the CoA site. Lys537 contacts ATP.

Belongs to the ATP-dependent AMP-binding enzyme family. Mg(2+) is required as a cofactor.

It catalyses the reaction (E)-4-coumarate + ATP + CoA = (E)-4-coumaroyl-CoA + AMP + diphosphate. The catalysed reaction is (E)-4-coumarate + ATP + H(+) = (E)-4-coumaroyl-AMP + diphosphate. The enzyme catalyses (E)-4-coumaroyl-AMP + CoA = (E)-4-coumaroyl-CoA + AMP + H(+). The protein operates within phytoalexin biosynthesis; 3,4',5-trihydroxystilbene biosynthesis; 3,4',5-trihydroxystilbene from trans-4-coumarate: step 1/2. Its function is as follows. Carboxylate--CoA ligase that may use 4-coumarate as substrate. Follows a two-step reaction mechanism, wherein the carboxylate substrate first undergoes adenylation by ATP, followed by a thioesterification in the presence of CoA to yield the final CoA thioester. In Dictyostelium discoideum (Social amoeba), this protein is Probable 4-coumarate--CoA ligase 1 (4cl1).